A 227-amino-acid polypeptide reads, in one-letter code: MTDSTRDGHASHSLHGGVYPGNLFMVVAPSGAGKSTLVNALLSKDSDICLSISYTTRKPRPGEQDGQHYHFTTVEDFRARHAAHEFLESAEVHGNYYGTSRVWIEEQMRNGHDVLLEIDWQGALQVKKQFRNAVGIFILPPSLDALEERLKKRGQDEPNVITRRLLAAGSEIAHASEAEYVVINENFERALAELECIVAATRLRFASQYARHTELFIDLGVHLPHAE.

One can recognise a Guanylate kinase-like domain in the interval 21-199 (GNLFMVVAPS…ALAELECIVA (179 aa)). 28–35 (APSGAGKS) lines the ATP pocket.

The protein belongs to the guanylate kinase family.

The protein resides in the cytoplasm. The enzyme catalyses GMP + ATP = GDP + ADP. Essential for recycling GMP and indirectly, cGMP. In Burkholderia orbicola (strain AU 1054), this protein is Guanylate kinase.